The sequence spans 1512 residues: DNA polymerase (1512 aa).

This sequence belongs to the DNA polymerase type-B family.

It localises to the host nucleus. The catalysed reaction is DNA(n) + a 2'-deoxyribonucleoside 5'-triphosphate = DNA(n+1) + diphosphate. The polypeptide is DNA polymerase (57/58) (Ictalurid herpesvirus 1 (strain Auburn) (IcHV-1)).